The chain runs to 183 residues: Small ribosomal subunit protein uS5 (183 aa).

The 61-residue stretch at 11–71 (FLERVVGINR…EEAKKSFFRV (61 aa)) folds into the S5 DRBM domain.

The protein belongs to the universal ribosomal protein uS5 family. As to quaternary structure, part of the 30S ribosomal subunit. Contacts proteins S4 and S8.

With S4 and S12 plays an important role in translational accuracy. Functionally, located at the back of the 30S subunit body where it stabilizes the conformation of the head with respect to the body. In Micrococcus luteus (Micrococcus lysodeikticus), this protein is Small ribosomal subunit protein uS5.